Here is a 276-residue protein sequence, read N- to C-terminus: Large ribosomal subunit protein uL2 (276 aa).

Disordered stretches follow at residues 29–54 (PEKS…SRRR) and 224–276 (AMNP…RGQR). The span at 256 to 276 (YKTRSKKKPSSKLIVKRRGQR) shows a compositional bias: basic residues.

This sequence belongs to the universal ribosomal protein uL2 family. As to quaternary structure, part of the 50S ribosomal subunit. Forms a bridge to the 30S subunit in the 70S ribosome.

Functionally, one of the primary rRNA binding proteins. Required for association of the 30S and 50S subunits to form the 70S ribosome, for tRNA binding and peptide bond formation. It has been suggested to have peptidyltransferase activity; this is somewhat controversial. Makes several contacts with the 16S rRNA in the 70S ribosome. This is Large ribosomal subunit protein uL2 from Maridesulfovibrio salexigens (strain ATCC 14822 / DSM 2638 / NCIMB 8403 / VKM B-1763) (Desulfovibrio salexigens).